The following is a 199-amino-acid chain: Calcium-binding protein CAST (199 aa).

Residues M1 to K13 are compositionally biased toward basic and acidic residues. A disordered region spans residues M1–L31. EF-hand domains lie at L36–D71, S75–G110, Q125–P160, and S163–P198. Residues D49, N51, D53, and E60 each contribute to the Ca(2+) site. Ca(2+)-binding residues include D138, N140, D142, E149, D178, D180, R182, and E187.

In terms of biological role, not known. Probably binds 3 calcium ions. The chain is Calcium-binding protein CAST from Solanum tuberosum (Potato).